The primary structure comprises 196 residues: Somatotropin (196 aa).

The first 18 residues, 1–18 (MEKVVLLLSVLSLGVVCP), serve as a signal peptide directing secretion. A Pyrrolidone carboxylic acid modification is found at Gln-19. Residue His-35 coordinates Zn(2+). The cysteines at positions 69 and 169 are disulfide-linked. Zn(2+) is bound at residue Glu-178. Cys-186 and Cys-194 are joined by a disulfide.

It belongs to the somatotropin/prolactin family.

It localises to the secreted. In terms of biological role, growth hormone plays an important role in growth control and is involved in the regulation of several anabolic processes. Implicated as an osmoregulatory substance important for seawater adaptation. The chain is Somatotropin (gh) from Siganus guttatus (Orange-spotted spinefoot).